A 154-amino-acid polypeptide reads, in one-letter code: MAASRALSLTAEAVRAVIPRRSGRLLAVFPRLLTRWETTSSIPEAGEGQIRLTDSCVQRLLEITEGSEFLRLQVEGGGCSGFQYKFSLDTVINPDDRVFEQGGARVVVDSDSLAFVKGAQVDFSQELIRSSFQVLNNPQAQQGCSCGSSFSVKV.

The transit peptide at 1-8 directs the protein to the mitochondrion; it reads MAASRALS. C79, C144, and C146 together coordinate Fe cation.

It belongs to the HesB/IscA family. Heterotetramer; forms a dimer of dimers with IBA57. Interacts with [2Fe-2S]-ISCA2 forming the heterodimer [2Fe- 2S]-ISCA2-IBA57 complex; [2Fe-2S] cluster binding is absolutely required to promote the complex formation.

It is found in the mitochondrion. In terms of biological role, involved in the maturation of mitochondrial 4Fe-4S proteins functioning late in the iron-sulfur cluster assembly pathway. May be involved in the binding of an intermediate of Fe/S cluster assembly. This chain is Iron-sulfur cluster assembly 2 homolog, mitochondrial (Isca2), found in Mus musculus (Mouse).